The primary structure comprises 422 residues: MSQLMEELSFRGLIQQQTDEEGLTKLLAEEKIKLYSGFDPTADSLHIGHLLPILTLRRFQEAGHHPIALVGGATGLIGDPSFKKAERSLNPAEIVEHWSDKIKGQLSQFLDFEAGENPAVIVNNYDWISQMNVITFLRDIGKNFGVNFMLAKDIVSSRIETGISYTEFSYVILQSLDFLNLYRNENCKLQIGGSDQWGNITSGLELIRKSEAEGAKAFGLTMPLVTKADGTKFGKTEGGAIWLDKEKTSPYEFYQFWINTDDRDVVKYLKYFTFLSKEEIASYEEKVQTAPEKREAQRRLAEEVTTLVHGRESLEQAVNISNALFKGEIKSLSAEEVKVGFKDVPSMEKSSTEELTLVDLLVESKLSPSKRQAREDITNGAVSINGERQTDKDYVLSAEDRIENQFTVLRRGKKKYFLVTYK.

Tyr35 provides a ligand contact to L-tyrosine. Residues 40 to 49 (PTADSLHIGH) carry the 'HIGH' region motif. Residues Tyr170 and Gln174 each contribute to the L-tyrosine site. Positions 232–236 (KFGKT) match the 'KMSKS' region motif. Lys235 contributes to the ATP binding site. In terms of domain architecture, S4 RNA-binding spans 355-421 (LTLVDLLVES…GKKKYFLVTY (67 aa)).

It belongs to the class-I aminoacyl-tRNA synthetase family. TyrS type 1 subfamily. In terms of assembly, homodimer.

Its subcellular location is the cytoplasm. It carries out the reaction tRNA(Tyr) + L-tyrosine + ATP = L-tyrosyl-tRNA(Tyr) + AMP + diphosphate + H(+). Its function is as follows. Catalyzes the attachment of tyrosine to tRNA(Tyr) in a two-step reaction: tyrosine is first activated by ATP to form Tyr-AMP and then transferred to the acceptor end of tRNA(Tyr). The protein is Tyrosine--tRNA ligase of Bacillus pumilus (strain SAFR-032).